A 294-amino-acid polypeptide reads, in one-letter code: Nucleotide-binding protein CLB_3433 (294 aa).

8 to 15 (GLSGAGKT) contributes to the ATP binding site. 59 to 62 (DIRG) serves as a coordination point for GTP.

The protein belongs to the RapZ-like family.

Its function is as follows. Displays ATPase and GTPase activities. The protein is Nucleotide-binding protein CLB_3433 of Clostridium botulinum (strain ATCC 19397 / Type A).